Consider the following 159-residue polypeptide: Transcription antitermination protein NusB (159 aa).

It belongs to the NusB family.

Involved in transcription antitermination. Required for transcription of ribosomal RNA (rRNA) genes. Binds specifically to the boxA antiterminator sequence of the ribosomal RNA (rrn) operons. The sequence is that of Transcription antitermination protein NusB from Xanthomonas axonopodis pv. citri (strain 306).